Consider the following 258-residue polypeptide: Imidazole glycerol phosphate synthase subunit HisF (258 aa).

Catalysis depends on residues Asp11 and Asp130.

Belongs to the HisA/HisF family. Heterodimer of HisH and HisF.

It is found in the cytoplasm. It catalyses the reaction 5-[(5-phospho-1-deoxy-D-ribulos-1-ylimino)methylamino]-1-(5-phospho-beta-D-ribosyl)imidazole-4-carboxamide + L-glutamine = D-erythro-1-(imidazol-4-yl)glycerol 3-phosphate + 5-amino-1-(5-phospho-beta-D-ribosyl)imidazole-4-carboxamide + L-glutamate + H(+). It functions in the pathway amino-acid biosynthesis; L-histidine biosynthesis; L-histidine from 5-phospho-alpha-D-ribose 1-diphosphate: step 5/9. Functionally, IGPS catalyzes the conversion of PRFAR and glutamine to IGP, AICAR and glutamate. The HisF subunit catalyzes the cyclization activity that produces IGP and AICAR from PRFAR using the ammonia provided by the HisH subunit. This Shigella boydii serotype 18 (strain CDC 3083-94 / BS512) protein is Imidazole glycerol phosphate synthase subunit HisF.